The chain runs to 288 residues: ATP synthase gamma chain (288 aa).

It belongs to the ATPase gamma chain family. As to quaternary structure, F-type ATPases have 2 components, CF(1) - the catalytic core - and CF(0) - the membrane proton channel. CF(1) has five subunits: alpha(3), beta(3), gamma(1), delta(1), epsilon(1). CF(0) has three main subunits: a, b and c.

The protein resides in the cell membrane. In terms of biological role, produces ATP from ADP in the presence of a proton gradient across the membrane. The gamma chain is believed to be important in regulating ATPase activity and the flow of protons through the CF(0) complex. The chain is ATP synthase gamma chain from Macrococcus caseolyticus (strain JCSC5402) (Macrococcoides caseolyticum).